We begin with the raw amino-acid sequence, 436 residues long: Trigger factor (436 aa).

The region spanning 161–246 (EDQLNIDFVG…VNTVSEPKLP (86 aa)) is the PPIase FKBP-type domain.

This sequence belongs to the FKBP-type PPIase family. Tig subfamily.

It localises to the cytoplasm. The enzyme catalyses [protein]-peptidylproline (omega=180) = [protein]-peptidylproline (omega=0). Functionally, involved in protein export. Acts as a chaperone by maintaining the newly synthesized protein in an open conformation. Functions as a peptidyl-prolyl cis-trans isomerase. This Pseudomonas syringae pv. syringae (strain B728a) protein is Trigger factor.